Reading from the N-terminus, the 458-residue chain is Phosphomethylpyrimidine synthase (458 aa).

Residues N80, M109, Y139, H175, 195–197 (SRG), 236–239 (DSLR), and E275 contribute to the substrate site. Residue H279 coordinates Zn(2+). Y302 contributes to the substrate binding site. H343 contributes to the Zn(2+) binding site. [4Fe-4S] cluster contacts are provided by C423, C426, and C431.

Belongs to the ThiC family. The cofactor is [4Fe-4S] cluster.

It carries out the reaction 5-amino-1-(5-phospho-beta-D-ribosyl)imidazole + S-adenosyl-L-methionine = 4-amino-2-methyl-5-(phosphooxymethyl)pyrimidine + CO + 5'-deoxyadenosine + formate + L-methionine + 3 H(+). Its pathway is cofactor biosynthesis; thiamine diphosphate biosynthesis. Catalyzes the synthesis of the hydroxymethylpyrimidine phosphate (HMP-P) moiety of thiamine from aminoimidazole ribotide (AIR) in a radical S-adenosyl-L-methionine (SAM)-dependent reaction. In Acaryochloris marina (strain MBIC 11017), this protein is Phosphomethylpyrimidine synthase.